A 415-amino-acid chain; its full sequence is Phosphoglycerate kinase (415 aa).

Substrate is bound by residues 24–26 (DLN), arginine 43, 66–69 (HLGR), arginine 125, and arginine 165. Residues lysine 215, glycine 303, glutamate 334, and 363-366 (GGDS) each bind ATP.

It belongs to the phosphoglycerate kinase family. In terms of assembly, monomer.

It is found in the cytoplasm. The enzyme catalyses (2R)-3-phosphoglycerate + ATP = (2R)-3-phospho-glyceroyl phosphate + ADP. Its pathway is carbohydrate degradation; glycolysis; pyruvate from D-glyceraldehyde 3-phosphate: step 2/5. The chain is Phosphoglycerate kinase from Mycobacterium avium (strain 104).